The sequence spans 254 residues: Germin-like protein 4-1 (254 aa).

The first 27 residues, 1–27 (MASRAFAAVFAAVALVVCSSVLPRALA), serve as a signal peptide directing secretion. A disulfide bridge connects residues C37 and C52. Positions 67 to 220 (KALGVPGNTV…AFMIDKDQVD (154 aa)) constitute a Cupin type-1 domain. Mn(2+) is bound by residues H115, H117, E122, and H166.

It belongs to the germin family. In terms of assembly, oligomer (believed to be a pentamer but probably hexamer).

It is found in the secreted. It localises to the extracellular space. The protein resides in the apoplast. In terms of biological role, may play a role in plant defense. Probably has no oxalate oxidase activity even if the active site is conserved. This is Germin-like protein 4-1 from Oryza sativa subsp. japonica (Rice).